Consider the following 110-residue polypeptide: Membrane-associated protein slr1513 (110 aa).

The protein localises to the cellular thylakoid membrane. Its subcellular location is the cell membrane. The sequence is that of Membrane-associated protein slr1513 from Synechocystis sp. (strain ATCC 27184 / PCC 6803 / Kazusa).